A 403-amino-acid polypeptide reads, in one-letter code: Phosphopentomutase (403 aa).

Positions 13, 298, 303, 339, 340, and 351 each coordinate Mn(2+).

The protein belongs to the phosphopentomutase family. Requires Mn(2+) as cofactor.

The protein localises to the cytoplasm. It catalyses the reaction 2-deoxy-alpha-D-ribose 1-phosphate = 2-deoxy-D-ribose 5-phosphate. It carries out the reaction alpha-D-ribose 1-phosphate = D-ribose 5-phosphate. It participates in carbohydrate degradation; 2-deoxy-D-ribose 1-phosphate degradation; D-glyceraldehyde 3-phosphate and acetaldehyde from 2-deoxy-alpha-D-ribose 1-phosphate: step 1/2. Functionally, isomerase that catalyzes the conversion of deoxy-ribose 1-phosphate (dRib-1-P) and ribose 1-phosphate (Rib-1-P) to deoxy-ribose 5-phosphate (dRib-5-P) and ribose 5-phosphate (Rib-5-P), respectively. The chain is Phosphopentomutase from Streptococcus mutans serotype c (strain ATCC 700610 / UA159).